A 150-amino-acid chain; its full sequence is Arginine repressor (150 aa).

Belongs to the ArgR family.

The protein localises to the cytoplasm. The protein operates within amino-acid biosynthesis; L-arginine biosynthesis [regulation]. In terms of biological role, regulates arginine biosynthesis genes. The protein is Arginine repressor of Halothermothrix orenii (strain H 168 / OCM 544 / DSM 9562).